The sequence spans 1158 residues: Type IV pilus biogenesis factor PilY1 (1158 aa).

The signal sequence occupies residues 1–29 (MIHQITRAGKSLLAAGCTLSILFASDSYA). Positions 841, 843, 845, 847, and 849 each coordinate Ca(2+).

It belongs to the PilY1 family.

The protein localises to the fimbrium. The protein resides in the membrane. It localises to the cytoplasm. It is found in the cytosol. Functionally, involved in pilus assembly, twitching motility and adhesion to host cells. Primes type IV pili (T4P) assembly and is required for inclusion of minor pilins PilV, PilW and PilX to the surface pili. Stabilizes assembled pilus fibers likely by antagonizing retraction mediated by PilT. Calcium-binding and calcium release by PilY1 seem to be essential for twitching motility and for regulation of pilus retraction dynamics of PilT. Regulates surface-activated virulence possibly by acting as a surface-attachment mechanosensor. The polypeptide is Type IV pilus biogenesis factor PilY1 (Pseudomonas aeruginosa (strain UCBPP-PA14)).